We begin with the raw amino-acid sequence, 626 residues long: Beta-galactosidase large subunit (626 aa).

The active-site Proton donor is the E466. E534 acts as the Nucleophile in catalysis.

It belongs to the glycosyl hydrolase 2 family. As to quaternary structure, heterodimer of a large (LacL) and a small subunit (LacM).

It catalyses the reaction Hydrolysis of terminal non-reducing beta-D-galactose residues in beta-D-galactosides.. Component of a beta-galactosidase that displays activity with the artificial chromogenic substrate o-nitrophenyl-beta-D-galactopyranoside (ONPG). The sequence is that of Beta-galactosidase large subunit from Leuconostoc lactis.